The following is a 229-amino-acid chain: Potassium/proton antiporter CemA (229 aa).

The next 3 membrane-spanning stretches (helical) occupy residues 6-26 (AFIP…ISLC), 107-127 (ILHF…SFWG), and 189-209 (ILSG…KYWI).

This sequence belongs to the CemA family.

It is found in the plastid. The protein localises to the chloroplast inner membrane. It catalyses the reaction K(+)(in) + H(+)(out) = K(+)(out) + H(+)(in). Contributes to K(+)/H(+) antiport activity by supporting proton efflux to control proton extrusion and homeostasis in chloroplasts in a light-dependent manner to modulate photosynthesis. Prevents excessive induction of non-photochemical quenching (NPQ) under continuous-light conditions. Indirectly promotes efficient inorganic carbon uptake into chloroplasts. This Arabidopsis thaliana (Mouse-ear cress) protein is Potassium/proton antiporter CemA.